Here is a 144-residue protein sequence, read N- to C-terminus: 3-dehydroquinate dehydratase (144 aa).

Catalysis depends on Y23, which acts as the Proton acceptor. Residues N74, H80, and D87 each coordinate substrate. Residue H100 is the Proton donor of the active site. Residues 101–102 (LS) and R111 each bind substrate.

This sequence belongs to the type-II 3-dehydroquinase family. Homododecamer.

It catalyses the reaction 3-dehydroquinate = 3-dehydroshikimate + H2O. Its pathway is metabolic intermediate biosynthesis; chorismate biosynthesis; chorismate from D-erythrose 4-phosphate and phosphoenolpyruvate: step 3/7. Catalyzes a trans-dehydration via an enolate intermediate. The sequence is that of 3-dehydroquinate dehydratase from Hydrogenovibrio crunogenus (strain DSM 25203 / XCL-2) (Thiomicrospira crunogena).